The primary structure comprises 129 residues: RxLR effector protein PexRD43 (129 aa).

A signal peptide spans 1-16 (MRLAMILLSIPLFVSG). The short motif at 44-56 (RSLRTSGEANEER) is the RxLR-dEER element.

This sequence belongs to the RxLR effector family.

It localises to the secreted. Its subcellular location is the host cytoplasm. It is found in the host nucleus. Effector that enhances P.infestans colonization of Nicotiana benthamiana leaves. This Phytophthora infestans (strain T30-4) (Potato late blight agent) protein is RxLR effector protein PexRD43.